We begin with the raw amino-acid sequence, 443 residues long: Pentatricopeptide repeat-containing protein 6, mitochondrial (443 aa).

The N-terminal 13 residues, 1 to 13 (MRILGSLPNNIRK), are a transit peptide targeting the mitochondrion. 2 PPR repeats span residues 130 to 164 (NIVDYTHILRVAMYTGNKHILEYIVARVKEKRIRP) and 220 to 254 (NSTTYDYLMVGLSRDGKIREIYDLIDTVWGINENS).

Its subcellular location is the mitochondrion. Its function is as follows. Mitochondrial RNA-binding protein required for the stability of the atp9 mRNA. This Schizosaccharomyces pombe (strain 972 / ATCC 24843) (Fission yeast) protein is Pentatricopeptide repeat-containing protein 6, mitochondrial (ppr6).